Here is a 768-residue protein sequence, read N- to C-terminus: Protein transport protein Sec23A (768 aa).

Position 2 is an N-acetylthreonine (Thr-2). Zn(2+) is bound by residues Cys-61, Cys-66, Cys-85, and Cys-88. Residue Thr-308 is modified to Phosphothreonine. Residues Pro-632–Leu-718 form a Gelsolin-like repeat.

This sequence belongs to the SEC23/SEC24 family. SEC23 subfamily. As to quaternary structure, COPII is composed of at least five proteins: the Sec23/24 complex, the Sec13/31 complex and Sar1. Interacts with SEC23IP. Interacts with HTR4. Interacts with SEC16A. Interacts with SLC6A4. Interacts (as part of the Sec23/24 complex) with SEC22B; recruits SEC22B into COPII-coated vesicles and allows the transport of this cargo from the endoplasmic reticulum to the Golgi. Interacts (via Gelsolin-like repeat) with MIA2 and MIA3; specifically involved in the transport of large cargos like the collagen COL7A1. Interacts with DDHD1. Interacts with TMEM39A. Interacts with SACM1L; this interaction is reduced in the absence of TMEM39A. Interacts with kinase FAM20C; transport of FAM20C from the endoplasmic reticulum to the Golgi is likely to be mediated by COPII vesicles.

The protein resides in the cytoplasmic vesicle. The protein localises to the COPII-coated vesicle membrane. Its subcellular location is the endoplasmic reticulum membrane. It localises to the cytoplasm. It is found in the cytosol. Component of the coat protein complex II (COPII) which promotes the formation of transport vesicles from the endoplasmic reticulum (ER). The coat has two main functions, the physical deformation of the endoplasmic reticulum membrane into vesicles and the selection of cargo molecules for their transport to the Golgi complex. Required for the translocation of insulin-induced glucose transporter SLC2A4/GLUT4 to the cell membrane. In Bos taurus (Bovine), this protein is Protein transport protein Sec23A.